Reading from the N-terminus, the 74-residue chain is Defensin Lc-def (74 aa).

Residues 1 to 27 (MEKKTVAALSFLFIVLFVAQEIAVTEA) form the signal peptide. Disulfide bonds link Cys30/Cys74, Cys41/Cys62, Cys47/Cys68, and Cys51/Cys70.

The protein resides in the secreted. Functionally, has antifungal activity against the phytopathogenic fungus A.niger VKM F-2259, but not against A.alternata VKM F-3047. Does not inhibit trypsin or chymotrypsin. This is Defensin Lc-def from Lens culinaris subsp. culinaris (Cultivated lentil).